The following is a 333-amino-acid chain: Transcription initiation factor IIB (333 aa).

The segment at 33-64 (EIYRCPICGNDRFVYNYERGEVVCIVCGAVVQ) adopts a TFIIB-type zinc-finger fold. Residues C37, C40, C56, and C59 each contribute to the Zn(2+) site. Tandem repeats lie at residues 149-232 (QELE…LREL) and 243-324 (LYIS…ELAK).

The protein belongs to the TFIIB family.

Functionally, stabilizes TBP binding to an archaeal box-A promoter. Also responsible for recruiting RNA polymerase II to the pre-initiation complex (DNA-TBP-TFIIB). This is Transcription initiation factor IIB from Pyrobaculum arsenaticum (strain DSM 13514 / JCM 11321 / PZ6).